The primary structure comprises 395 residues: Protein HIGH CHLOROPHYLL FLUORESCENCE PHENOTYPE 244, chloroplastic (395 aa).

Residues 1-64 constitute a chloroplast transit peptide; it reads MASLRLPAQL…ERSIVVPVTC (64 aa).

The protein belongs to the NmrA-type oxidoreductase family. As to quaternary structure, component of a high molecular weight complex containing OHP1, OHP2 and HCF244, and PSII core proteins D1/D2, HCF136 and HCF173. Interacts with OHP1. Forms a trimeric complex with OHP1 and OHP2 that mutually stabilizes each subunit.

The protein resides in the plastid. It is found in the chloroplast stroma. Its subcellular location is the chloroplast thylakoid membrane. Its function is as follows. Auxiliary factor required, together with HCF173, for the biogenesis of photosystem II (PSII), especially for the synthesis of the reaction center proteins (e.g. D1), via the regulation of the corresponding mRNA (e.g. psbA) translation initiation (ribosomal loading) and stabilization. Forms a trimeric complex with OHP1 and OHP2 that is required to promote PSII core subunit assembly. The trimeric complex forms a transient PSII reaction center-like complex with PsbA, PsbD, PsbE, PsbF and PsbI subunits in thylakoids for early assembly of PSII as well as PSII repair. The trimeric complex is required for the recruitment of ribosomes to the psbA mRNA during PSII biogenesis and repair. This is Protein HIGH CHLOROPHYLL FLUORESCENCE PHENOTYPE 244, chloroplastic from Arabidopsis thaliana (Mouse-ear cress).